Consider the following 351-residue polypeptide: RCC1 repeat-containing protein C10F6.04 (351 aa).

4 RCC1 repeats span residues 1 to 48, 50 to 106, 108 to 162, and 163 to 212; these read MLLS…LLDE, SQLW…IVHA, RRRV…CVTN, and EGNL…VLQE.

Its subcellular location is the cytoplasm. It is found in the nucleus. This Schizosaccharomyces pombe (strain 972 / ATCC 24843) (Fission yeast) protein is RCC1 repeat-containing protein C10F6.04.